A 118-amino-acid chain; its full sequence is uncharacterized protein (118 aa).

A helical membrane pass occupies residues 21–38 (IVYFFFFFGLETFFSIIN).

It is found in the membrane. This is an uncharacterized protein from Dictyostelium discoideum (Social amoeba).